The primary structure comprises 210 residues: Secreted isochorismatase effector Isc1 (210 aa).

Residues aspartate 25, lysine 90, and cysteine 124 contribute to the active site.

Belongs to the isochorismatase family.

Its subcellular location is the secreted. It is found in the host cytoplasm. The protein resides in the host nucleus. It catalyses the reaction isochorismate + H2O = (2S,3S)-2,3-dihydroxy-2,3-dihydrobenzoate + pyruvate. In terms of biological role, secreted isochorismatase required for full virulence of P.sojae. Suppresses salicylate-mediated innate immunity of the host by disrupting the plant salicylate metabolism pathway via hydrolysis of its isochorismate precursor. The protein is Secreted isochorismatase effector Isc1 of Phytophthora sojae (strain P6497) (Soybean stem and root rot agent).